Consider the following 148-residue polypeptide: Deoxyuridine 5'-triphosphate nucleotidohydrolase (148 aa).

Substrate is bound by residues 67–69 (RSG), Asn80, 84–86 (LID), and Met94.

The protein belongs to the dUTPase family. The cofactor is Mg(2+).

The enzyme catalyses dUTP + H2O = dUMP + diphosphate + H(+). The protein operates within pyrimidine metabolism; dUMP biosynthesis; dUMP from dCTP (dUTP route): step 2/2. Its function is as follows. This enzyme is involved in nucleotide metabolism: it produces dUMP, the immediate precursor of thymidine nucleotides and it decreases the intracellular concentration of dUTP so that uracil cannot be incorporated into DNA. This Paraburkholderia phytofirmans (strain DSM 17436 / LMG 22146 / PsJN) (Burkholderia phytofirmans) protein is Deoxyuridine 5'-triphosphate nucleotidohydrolase.